The following is a 445-amino-acid chain: MQVPKNNIYTVSRLNGEVRQILEGQLGKIWLNGEISNFSTPSSGHWYLTLKDHFSQIRCAMFKGRNQSVSFKPVNGQQVIVKGAISVYEPRGDYQLLIESMLPAGDGLLAQQFEALKMKLAALGLFAADTKRALPKNIQRIGVITSPTGAAIRDVLHVLARRDPSIEVIIYPTQVQGENADINICQAINIANQRLEVDVLLLTRGGGSLEDLWCFNSEALAHTIYNSALPIVSAVGHEVDTTISDYVADVRAPTPSAGAELLSQDSDNKSQRLATVLARLKQSASHYQLKQERRLSLLEHRLQRLDPKRTLQQFEQRFDEMQLRLEAALTNKLHGLSRRQQQLASRLEQQSPKHKLALEANRLSYLATRLQDAMQDKLSHSGQRIKYVAHQLETVSPLATLSRGYSITTDVNGAVITSASQISLGDTITTQLSNERLMSTVTRLP.

This sequence belongs to the XseA family. As to quaternary structure, heterooligomer composed of large and small subunits.

The protein localises to the cytoplasm. The enzyme catalyses Exonucleolytic cleavage in either 5'- to 3'- or 3'- to 5'-direction to yield nucleoside 5'-phosphates.. In terms of biological role, bidirectionally degrades single-stranded DNA into large acid-insoluble oligonucleotides, which are then degraded further into small acid-soluble oligonucleotides. This chain is Exodeoxyribonuclease 7 large subunit, found in Shewanella oneidensis (strain ATCC 700550 / JCM 31522 / CIP 106686 / LMG 19005 / NCIMB 14063 / MR-1).